The following is a 424-amino-acid chain: Dihydroorotase (424 aa).

The Zn(2+) site is built by His58 and His60. Residues 60 to 62 (HLR), Asn92, and Asn276 contribute to the substrate site. Residue Asp303 participates in Zn(2+) binding. Asp303 is an active-site residue. Substrate-binding positions include His307 and 321 to 322 (FG).

Belongs to the metallo-dependent hydrolases superfamily. DHOase family. Class I DHOase subfamily. Zn(2+) is required as a cofactor.

It carries out the reaction (S)-dihydroorotate + H2O = N-carbamoyl-L-aspartate + H(+). It functions in the pathway pyrimidine metabolism; UMP biosynthesis via de novo pathway; (S)-dihydroorotate from bicarbonate: step 3/3. Its function is as follows. Catalyzes the reversible cyclization of carbamoyl aspartate to dihydroorotate. This chain is Dihydroorotase, found in Staphylococcus aureus (strain COL).